The chain runs to 306 residues: RNA pseudouridylate synthase domain-containing protein 1 (306 aa).

Met1 is modified (N-acetylmethionine). Asp67 is an active-site residue. A disordered region spans residues 255 to 290; that stretch reads RTDPDPDPMSGGPRPCSPSTPQPRPGRPPPETEAQR. Over residues 269–285 the composition is skewed to pro residues; that stretch reads PCSPSTPQPRPGRPPPE.

This sequence belongs to the pseudouridine synthase RluA family.

This chain is RNA pseudouridylate synthase domain-containing protein 1 (Rpusd1), found in Mus musculus (Mouse).